A 175-amino-acid polypeptide reads, in one-letter code: RNA pyrophosphohydrolase (175 aa).

Residues 7–150 (GYRLNVGIIL…KRQVYIQALK (144 aa)) enclose the Nudix hydrolase domain. The short motif at 39–60 (GGLAPGETAMQAMYRELHEEVG) is the Nudix box element.

This sequence belongs to the Nudix hydrolase family. RppH subfamily. Requires a divalent metal cation as cofactor.

Its function is as follows. Accelerates the degradation of transcripts by removing pyrophosphate from the 5'-end of triphosphorylated RNA, leading to a more labile monophosphorylated state that can stimulate subsequent ribonuclease cleavage. The protein is RNA pyrophosphohydrolase of Legionella pneumophila (strain Paris).